We begin with the raw amino-acid sequence, 317 residues long: Tricarboxylate transport protein B, mitochondrial (317 aa).

A propeptide spans 1–20 (MSGSPKFVSPFHRPHCLSAA) (removed in mature form). 3 Solcar repeats span residues 29–117 (THPG…LSNQ), 128–214 (TRGL…LRNW), and 224–309 (INPV…VVKV). A run of 4 helical transmembrane segments spans residues 35-55 (ILAGGIAGGIEICITFPTEYV), 130-150 (GLICGLGAGVAEAVVVVCPME), 223-243 (SINPVVTGLFGAVAGAASVFG), and 294-314 (MDVAIVFIIYEEVVKVLNKVW).

Belongs to the mitochondrial carrier (TC 2.A.29) family. In terms of processing, possesses a short cleavable presequence, which, however, is found to be dispensable both for targeting to mitochondria and insertion into the inner membrane. However, the presequence is required to keep SLC25A1 in a soluble state and thus in an import-competent state. Mature SLC25A1 lacking the presequence is prone to aggregation.

The protein resides in the mitochondrion inner membrane. It catalyses the reaction (S)-malate(in) + citrate(out) = (S)-malate(out) + citrate(in). The catalysed reaction is D-threo-isocitrate(in) + citrate(out) = D-threo-isocitrate(out) + citrate(in). The enzyme catalyses citrate(out) + succinate(in) = citrate(in) + succinate(out). It carries out the reaction cis-aconitate(in) + citrate(out) = cis-aconitate(out) + citrate(in). It catalyses the reaction trans-aconitate(in) + citrate(out) = trans-aconitate(out) + citrate(in). The catalysed reaction is phosphoenolpyruvate(in) + citrate(out) = phosphoenolpyruvate(out) + citrate(in). The enzyme catalyses maleate(in) + citrate(out) = maleate(out) + citrate(in). Mitochondrial electroneutral antiporter that exports citrate from the mitochondria into the cytosol in exchange for malate. Also able to mediate the exchange of citrate for isocitrate, phosphoenolpyruvate, cis-aconitate and to a lesser extent trans-aconitate, maleate and succinate. In the cytoplasm, citrate plays important roles in fatty acid and sterol synthesis, regulation of glycolysis, protein acetylation, and other physiopathological processes. The protein is Tricarboxylate transport protein B, mitochondrial of Danio rerio (Zebrafish).